Here is a 200-residue protein sequence, read N- to C-terminus: Holliday junction resolvase RecU (200 aa).

Mg(2+)-binding residues include threonine 82, aspartate 84, glutamate 97, and glutamine 116.

Belongs to the RecU family. Requires Mg(2+) as cofactor.

It localises to the cytoplasm. It carries out the reaction Endonucleolytic cleavage at a junction such as a reciprocal single-stranded crossover between two homologous DNA duplexes (Holliday junction).. Endonuclease that resolves Holliday junction intermediates in genetic recombination. Cleaves mobile four-strand junctions by introducing symmetrical nicks in paired strands. Promotes annealing of linear ssDNA with homologous dsDNA. Required for DNA repair, homologous recombination and chromosome segregation. The chain is Holliday junction resolvase RecU from Streptococcus sanguinis (strain SK36).